Consider the following 313-residue polypeptide: MLKMESTQQMASSIINTSFEAAVVAATSTLELMGIQYDYNEIYTRVKSKFDYVMDDSGVKNNLLGKAATIDQALNGKFGSVMRNKNWMTDSRTVAKLDEDVNKLRMMLSSKGIDQKMRVLNACFSVKRIPGKSSSVIKCTRLMKDKIERGAVEVDDSFVEEKMEVDTVDWKSRYDQLERRFESLKQRVNEKYTTWVQKAKKVNENMYSLQNVISQQQNQIADLQNYCSKLEADLQNKVGSLVSSVEWYLKSMELPDEVKTDIEQQLNSIDTISPINAIDDLEILIRNLIHDYDRTFLMFKGLLRQCNYEYAYE.

Residues 1 to 149 (MLKMESTQQM…TRLMKDKIER (149 aa)) form an RNA-binding region. A dimerization region spans residues 150–206 (GAVEVDDSFVEEKMEVDTVDWKSRYDQLERRFESLKQRVNEKYTTWVQKAKKVNENM). Residues 166 to 237 (DTVDWKSRYD…SKLEADLQNK (72 aa)) adopt a coiled-coil conformation. The tract at residues 170–234 (WKSRYDQLER…NYCSKLEADL (65 aa)) is interaction with host ZC3H7B. Positions 208 to 313 (SLQNVISQQQ…RQCNYEYAYE (106 aa)) are interaction with host EIF4G1.

This sequence belongs to the rotavirus NSP3 family. As to quaternary structure, homodimer. Interacts (via the coiled-coil region) with host ZC3H7B (via LD motif). Interacts with host EIF4G1.

It localises to the host cytoplasm. In terms of biological role, plays an important role in stimulating the translation of viral mRNAs. These mRNAs are capped but not polyadenylated, instead terminating in a conserved sequence 'GACC' at the 3' that is recognized by NSP3, which competes with host PABPC1 for EIF4G1 binding. The interaction between NSP3 and host EIF4G1 stabilizes the EIF4E-EIF4G1 interaction, thereby facilitating the initiation of capped mRNA translation. This chain is Non-structural protein 3, found in Rotavirus A (strain RVA/Cow/United Kingdom/UK/1975/G6P7[5]) (RV-A).